A 553-amino-acid chain; its full sequence is Hydroxylamine reductase (553 aa).

Cys3, Cys6, Cys18, and Cys25 together coordinate [2Fe-2S] cluster. Hybrid [4Fe-2O-2S] cluster-binding residues include His249, Glu273, Cys317, Cys405, Cys433, Cys459, Glu493, and Lys495. Cys405 is modified (cysteine persulfide).

It belongs to the HCP family. [2Fe-2S] cluster is required as a cofactor. It depends on hybrid [4Fe-2O-2S] cluster as a cofactor.

It localises to the cytoplasm. The enzyme catalyses A + NH4(+) + H2O = hydroxylamine + AH2 + H(+). In terms of biological role, catalyzes the reduction of hydroxylamine to form NH(3) and H(2)O. The sequence is that of Hydroxylamine reductase from Actinobacillus succinogenes (strain ATCC 55618 / DSM 22257 / CCUG 43843 / 130Z).